Consider the following 171-residue polypeptide: Shikimate kinase (171 aa).

Residue 14–19 (GAGKST) participates in ATP binding. S18 lines the Mg(2+) pocket. Positions 36, 60, and 82 each coordinate substrate. R120 serves as a coordination point for ATP. R139 is a binding site for substrate. Q156 lines the ATP pocket.

This sequence belongs to the shikimate kinase family. Monomer. Mg(2+) serves as cofactor.

It is found in the cytoplasm. The enzyme catalyses shikimate + ATP = 3-phosphoshikimate + ADP + H(+). It participates in metabolic intermediate biosynthesis; chorismate biosynthesis; chorismate from D-erythrose 4-phosphate and phosphoenolpyruvate: step 5/7. Functionally, catalyzes the specific phosphorylation of the 3-hydroxyl group of shikimic acid using ATP as a cosubstrate. The chain is Shikimate kinase from Pseudoalteromonas atlantica (strain T6c / ATCC BAA-1087).